The chain runs to 317 residues: Olfactory receptor 5K17 (317 aa).

Topologically, residues 1–28 are extracellular; that stretch reads MMKANHSLTVEFILIGFSDHTDLKTLLF. An N-linked (GlcNAc...) asparagine glycan is attached at N5. A helical transmembrane segment spans residues 29 to 49; it reads LLFSAIYLVTIVGNLGLVALI. Residues 50 to 56 are Cytoplasmic-facing; the sequence is YMEPRLH. A helical transmembrane segment spans residues 57 to 77; it reads TPMYIFLGNLALMDSCCSCAI. Topologically, residues 78 to 93 are extracellular; the sequence is TPKMLENFFSVDRRIS. Residues 94–114 traverse the membrane as a helical segment; it reads LYECMVQFYFLCLAETADCFL. A disulfide bond links C97 and C189. The Cytoplasmic portion of the chain corresponds to 115 to 144; the sequence is LAAMAYDRYVAICNPLQYHTMMSKKLSIQM. A helical transmembrane segment spans residues 145-165; that stretch reads SIGTFIASNLHSLIHTGCLLR. Over 166-198 the chain is Extracellular; it reads LNFCKSRRIDHFFCDILPLYKLSCTDPFINELM. Residues 199–219 traverse the membrane as a helical segment; the sequence is LYIFSMPIQVFTITTVLVSYS. The Cytoplasmic portion of the chain corresponds to 220-239; sequence CILLTVFKMKSKDGRGKAFS. Residues 240–259 traverse the membrane as a helical segment; the sequence is TCASHFFSVSIFYICLLMYI. The Extracellular segment spans residues 260–268; it reads GPSKNSNKD. Residues 269–289 traverse the membrane as a helical segment; sequence IPVGVFYTIVIPLLNPFIYSL. Topologically, residues 290 to 317 are cytoplasmic; that stretch reads RNKEVVNAVKKVMKTHSIFKNSSASIAH.

This sequence belongs to the G-protein coupled receptor 1 family.

The protein localises to the cell membrane. Functionally, potential odorant receptor. In Mus musculus (Mouse), this protein is Olfactory receptor 5K17.